An 84-amino-acid chain; its full sequence is Tetrahydromethanopterin S-methyltransferase subunit G (84 aa).

The chain crosses the membrane as a helical span at residues 50–70 (IGILYGLVIGIILSYILPALI).

Belongs to the MtrG family. In terms of assembly, the complex is composed of 8 subunits; MtrA, MtrB, MtrC, MtrD, MtrE, MtrF, MtrG and MtrH.

The protein localises to the cell membrane. The enzyme catalyses 5-methyl-5,6,7,8-tetrahydromethanopterin + coenzyme M + 2 Na(+)(in) = 5,6,7,8-tetrahydromethanopterin + methyl-coenzyme M + 2 Na(+)(out). It functions in the pathway one-carbon metabolism; methanogenesis from CO(2); methyl-coenzyme M from 5,10-methylene-5,6,7,8-tetrahydromethanopterin: step 2/2. Functionally, part of a complex that catalyzes the formation of methyl-coenzyme M and tetrahydromethanopterin from coenzyme M and methyl-tetrahydromethanopterin. This is an energy-conserving, sodium-ion translocating step. In Methanocaldococcus jannaschii (strain ATCC 43067 / DSM 2661 / JAL-1 / JCM 10045 / NBRC 100440) (Methanococcus jannaschii), this protein is Tetrahydromethanopterin S-methyltransferase subunit G.